The following is a 432-amino-acid chain: Enolase (432 aa).

Glutamine 167 is a (2R)-2-phosphoglycerate binding site. Glutamate 209 functions as the Proton donor in the catalytic mechanism. Positions 246, 291, and 318 each coordinate Mg(2+). (2R)-2-phosphoglycerate contacts are provided by lysine 343, arginine 372, serine 373, and lysine 394. The active-site Proton acceptor is the lysine 343.

It belongs to the enolase family. In terms of assembly, component of the RNA degradosome, a multiprotein complex involved in RNA processing and mRNA degradation. Mg(2+) is required as a cofactor.

It is found in the cytoplasm. Its subcellular location is the secreted. The protein resides in the cell surface. The enzyme catalyses (2R)-2-phosphoglycerate = phosphoenolpyruvate + H2O. It functions in the pathway carbohydrate degradation; glycolysis; pyruvate from D-glyceraldehyde 3-phosphate: step 4/5. Catalyzes the reversible conversion of 2-phosphoglycerate (2-PG) into phosphoenolpyruvate (PEP). It is essential for the degradation of carbohydrates via glycolysis. The polypeptide is Enolase (Aliivibrio fischeri (strain ATCC 700601 / ES114) (Vibrio fischeri)).